The sequence spans 85 residues: SPbeta prophage-derived uncharacterized protein YoqG (85 aa).

The sequence is that of SPbeta prophage-derived uncharacterized protein YoqG (yoqG) from Bacillus subtilis (strain 168).